The following is a 154-amino-acid chain: Endoribonuclease YbeY (154 aa).

Positions 114, 118, and 124 each coordinate Zn(2+).

The protein belongs to the endoribonuclease YbeY family. It depends on Zn(2+) as a cofactor.

The protein resides in the cytoplasm. Functionally, single strand-specific metallo-endoribonuclease involved in late-stage 70S ribosome quality control and in maturation of the 3' terminus of the 16S rRNA. The protein is Endoribonuclease YbeY of Haemophilus influenzae (strain PittEE).